Consider the following 365-residue polypeptide: Histidinol-phosphate aminotransferase (365 aa).

Lysine 223 bears the N6-(pyridoxal phosphate)lysine mark.

The protein belongs to the class-II pyridoxal-phosphate-dependent aminotransferase family. Histidinol-phosphate aminotransferase subfamily. In terms of assembly, homodimer. The cofactor is pyridoxal 5'-phosphate.

The enzyme catalyses L-histidinol phosphate + 2-oxoglutarate = 3-(imidazol-4-yl)-2-oxopropyl phosphate + L-glutamate. It participates in amino-acid biosynthesis; L-histidine biosynthesis; L-histidine from 5-phospho-alpha-D-ribose 1-diphosphate: step 7/9. The protein is Histidinol-phosphate aminotransferase of Bacillus pumilus (strain SAFR-032).